The primary structure comprises 79 residues: Probable [Fe-S]-dependent transcriptional repressor (79 aa).

Residues C56, C61, C64, and C71 each coordinate iron-sulfur cluster.

It belongs to the FeoC family.

Its function is as follows. May function as a transcriptional regulator that controls feoABC expression. This Klebsiella pneumoniae (strain 342) protein is Probable [Fe-S]-dependent transcriptional repressor.